The primary structure comprises 90 residues: Small ribosomal subunit protein uS15c (90 aa).

It belongs to the universal ribosomal protein uS15 family. Part of the 30S ribosomal subunit.

The protein localises to the plastid. It localises to the chloroplast. In Acorus calamus (Sweet flag), this protein is Small ribosomal subunit protein uS15c (rps15).